A 618-amino-acid chain; its full sequence is Carbamoyl phosphate synthase large chain, C-terminal section (618 aa).

Residues 1-78 (MDMEKLKEIL…ETFVYKEQDE (78 aa)) are oligomerization domain. A carbamoyl phosphate synthetic domain region spans residues 79 to 477 (SNPSDRKKVI…YKAQLSANME (399 aa)). Positions 208–399 (SKLLKKLNIP…LAKLATKIML (192 aa)) constitute an ATP-grasp domain. Residues Arg244, Lys283, Leu285, Glu290, Gly315, Val316, His317, Ser318, Gln358, and Glu370 each contribute to the ATP site. Mg(2+)-binding residues include Gln358, Glu370, and Asn372. The Mn(2+) site is built by Gln358, Glu370, and Asn372. Residues 476–618 (MELPIVGNVF…ELDARIKNRF (143 aa)) form the MGS-like domain. Positions 478-618 (LPIVGNVFIS…ELDARIKNRF (141 aa)) are allosteric domain.

Belongs to the CarB family. In terms of assembly, composed of two chains; the small (or glutamine) chain promotes the hydrolysis of glutamine to ammonia, which is used by the large (or ammonia) chain to synthesize carbamoyl phosphate. Tetramer of heterodimers (alpha,beta)4. Mg(2+) is required as a cofactor. The cofactor is Mn(2+).

The catalysed reaction is hydrogencarbonate + L-glutamine + 2 ATP + H2O = carbamoyl phosphate + L-glutamate + 2 ADP + phosphate + 2 H(+). It catalyses the reaction hydrogencarbonate + NH4(+) + 2 ATP = carbamoyl phosphate + 2 ADP + phosphate + 2 H(+). Its pathway is amino-acid biosynthesis; L-arginine biosynthesis; carbamoyl phosphate from bicarbonate: step 1/1. It participates in pyrimidine metabolism; UMP biosynthesis via de novo pathway; (S)-dihydroorotate from bicarbonate: step 1/3. Large subunit of the glutamine-dependent carbamoyl phosphate synthetase (CPSase). CPSase catalyzes the formation of carbamoyl phosphate from the ammonia moiety of glutamine, carbonate, and phosphate donated by ATP, constituting the first step of 2 biosynthetic pathways, one leading to arginine and/or urea and the other to pyrimidine nucleotides. The large subunit (synthetase) binds the substrates ammonia (free or transferred from glutamine from the small subunit), hydrogencarbonate and ATP and carries out an ATP-coupled ligase reaction, activating hydrogencarbonate by forming carboxy phosphate which reacts with ammonia to form carbamoyl phosphate. This chain is Carbamoyl phosphate synthase large chain, C-terminal section (carB2), found in Methanocaldococcus jannaschii (strain ATCC 43067 / DSM 2661 / JAL-1 / JCM 10045 / NBRC 100440) (Methanococcus jannaschii).